A 201-amino-acid polypeptide reads, in one-letter code: Probable molybdenum cofactor guanylyltransferase (201 aa).

Residues 20–22 (LAG), K32, D77, and D106 each bind GTP. D106 lines the Mg(2+) pocket.

It belongs to the MobA family. The cofactor is Mg(2+).

Its subcellular location is the cytoplasm. The enzyme catalyses Mo-molybdopterin + GTP + H(+) = Mo-molybdopterin guanine dinucleotide + diphosphate. In terms of biological role, transfers a GMP moiety from GTP to Mo-molybdopterin (Mo-MPT) cofactor (Moco or molybdenum cofactor) to form Mo-molybdopterin guanine dinucleotide (Mo-MGD) cofactor. The polypeptide is Probable molybdenum cofactor guanylyltransferase (Aquifex aeolicus (strain VF5)).